The sequence spans 173 residues: C-phycocyanin-3 beta subunit (173 aa).

Asn-73 is modified (N4-methylasparagine). 2 residues coordinate (2R,3E)-phycocyanobilin: Cys-83 and Cys-154.

Belongs to the phycobiliprotein family. In terms of assembly, heterodimer of an alpha and a beta subunit, which further assembles into trimers and the trimers into hexamers. In terms of processing, contains two covalently linked bilin chromophores.

The protein resides in the cellular thylakoid membrane. Its function is as follows. Light-harvesting photosynthetic bile pigment-protein from the phycobiliprotein complex (phycobilisome, PBS). Phycocyanin is the major phycobiliprotein in the PBS rod. The protein is C-phycocyanin-3 beta subunit (cpcB3) of Microchaete diplosiphon (Fremyella diplosiphon).